A 140-amino-acid polypeptide reads, in one-letter code: NADPH-dependent 7-cyano-7-deazaguanine reductase (140 aa).

Cysteine 51 acts as the Thioimide intermediate in catalysis. Aspartate 58 serves as the catalytic Proton donor. Residues 73-75 and 92-93 contribute to the substrate site; these read LES and HE.

This sequence belongs to the GTP cyclohydrolase I family. QueF type 1 subfamily.

Its subcellular location is the cytoplasm. The enzyme catalyses 7-aminomethyl-7-carbaguanine + 2 NADP(+) = 7-cyano-7-deazaguanine + 2 NADPH + 3 H(+). It functions in the pathway tRNA modification; tRNA-queuosine biosynthesis. In terms of biological role, catalyzes the NADPH-dependent reduction of 7-cyano-7-deazaguanine (preQ0) to 7-aminomethyl-7-deazaguanine (preQ1). The sequence is that of NADPH-dependent 7-cyano-7-deazaguanine reductase from Syntrophus aciditrophicus (strain SB).